A 192-amino-acid polypeptide reads, in one-letter code: NADH dehydrogenase [ubiquinone] iron-sulfur protein 3 (192 aa).

The protein belongs to the complex I 30 kDa subunit family. Complex I is composed of about 45 different subunits. This is a component of the iron-sulfur (IP) fragment of the enzyme.

It localises to the mitochondrion inner membrane. It catalyses the reaction a ubiquinone + NADH + 5 H(+)(in) = a ubiquinol + NAD(+) + 4 H(+)(out). Its function is as follows. Core subunit of the mitochondrial membrane respiratory chain NADH dehydrogenase (Complex I) that is believed to belong to the minimal assembly required for catalysis. Complex I functions in the transfer of electrons from NADH to the respiratory chain. The immediate electron acceptor for the enzyme is believed to be ubiquinone. In Beta vulgaris (Sugar beet), this protein is NADH dehydrogenase [ubiquinone] iron-sulfur protein 3 (NAD9).